A 260-amino-acid chain; its full sequence is Kallikrein-8 (260 aa).

The first 28 residues, 1-28 (MGRPPPCAIQPWILLLLFMGAWAGLTRA), serve as a signal peptide directing secretion. Residues 29–32 (QGSK) constitute a propeptide that is removed on maturation. The Peptidase S1 domain maps to 33–257 (ILEGRECIPH…YTTWIKKTMD (225 aa)). 6 disulfides stabilise this stretch: Cys-39-Cys-173, Cys-58-Cys-74, Cys-145-Cys-246, Cys-152-Cys-218, Cys-184-Cys-198, and Cys-208-Cys-233. His-73 (charge relay system) is an active-site residue. Asn-110 carries an N-linked (GlcNAc...) asparagine glycan. Asp-120 serves as the catalytic Charge relay system. Ser-212 (charge relay system) is an active-site residue.

Belongs to the peptidase S1 family. Kallikrein subfamily. In terms of assembly, interacts with SPINK9. Expressed in the limbic system of mouse brain and is localized at highest concentration in pyramidal neurons of the hippocampal CA1-3 subfields. Also detected in spinal cord gray matter and in keratinized stratified epithelia of epidermis, hair, tongue, palate, nasal cavity, pharynges, esophagus and forestomach. In skin and mucus membranes, expressed in stratum spinosum and stratum granulosum. Expressed during estrus in vaginal epithelial cells but not stromal cells. Within the vaginal epithelium, expressed in prickle cells, granular cells and parakeratotic cells but not in basal cells. Not expressed in uterus. Expressed in the keratinocytes.

The protein localises to the secreted. Its subcellular location is the cytoplasm. It catalyses the reaction Cleavage of amide substrates following the basic amino acids Arg or Lys at the P1 position, with a preference for Arg over Lys.. With respect to regulation, strongly inhibited by diisopropyl fluorophosphate, leupeptin and (4-amidinophenyl)methanesulfonyl 1-fluoride. Functionally, serine protease which is capable of degrading a number of proteins such as casein, fibrinogen, kininogen, fibronectin and collagen type IV. Also cleaves L1CAM in response to increased neural activity. Induces neurite outgrowth and fasciculation of cultured hippocampal neurons. Plays a role in the formation and maturation of orphan and small synaptic boutons in the Schaffer-collateral pathway, regulates Schaffer-collateral long-term potentiation in the hippocampus and is required for memory acquisition and synaptic plasticity. Involved in skin desquamation and keratinocyte proliferation. Plays a role in the secondary phase of pathogenesis following spinal cord injury. The polypeptide is Kallikrein-8 (Klk8) (Mus musculus (Mouse)).